A 55-amino-acid polypeptide reads, in one-letter code: Mitochondrial import receptor subunit TOM7 homolog (55 aa).

Topologically, residues 1 to 20 are cytoplasmic; the sequence is MVKLSKEAKQRLQQLFKGGQ. The helical transmembrane segment at 21 to 36 threads the bilayer; the sequence is FAIRWGFIPLVIYLGF. Topologically, residues 37-55 are mitochondrial intermembrane; it reads KRGADPGMPEPTVLSLLWG.

The protein belongs to the Tom7 family. As to quaternary structure, forms part of the preprotein translocase complex of the outer mitochondrial membrane (TOM complex) which consists of at least 7 different proteins (TOMM5, TOMM6, TOMM7, TOMM20, TOMM22, TOMM40 and TOMM70).

Its subcellular location is the mitochondrion outer membrane. In terms of biological role, required for assembly and stability of the TOM complex. Positive regulator of PRKN translocation to damaged mitochondria. Acts probably by stabilizing PINK1 on the outer membrane of depolarized mitochondria. The chain is Mitochondrial import receptor subunit TOM7 homolog (TOMM7) from Bos taurus (Bovine).